A 2081-amino-acid chain; its full sequence is Non-reducing polyketide synthase terA (2081 aa).

The N-terminal acylcarrier protein transacylase (SAT) domain (SAT) stretch occupies residues 85–190 (TLTLAFRIGV…ISLDIFAPFH (106 aa)). A Ketosynthase family 3 (KS3) domain is found at 316–749 (AQKIAIVGMA…GGNTGLLLED (434 aa)). Residues cysteine 488, histidine 623, and histidine 667 each act as for beta-ketoacyl synthase activity in the active site. Positions 849 to 1147 (LFTGQGSHYT…LTLPSLRKQE (299 aa)) are malonyl-CoA:ACP transacylase (MAT) domain. The tract at residues 1230 to 1364 (QKVIKEDFGQ…CHVEYGDIKT (135 aa)) is N-terminal hotdog fold. The PKS/mFAS DH domain occupies 1230–1539 (QKVIKEDFGQ…FKAIPRAVIN (310 aa)). Residues 1259–1536 (VTGHLVNGSA…GVKFKAIPRA (278 aa)) form a product template (PT) domain region. Residue histidine 1262 is the Proton acceptor; for dehydratase activity of the active site. The tract at residues 1392–1539 (YQKLDRKAAY…FKAIPRAVIN (148 aa)) is C-terminal hotdog fold. The Proton donor; for dehydratase activity role is filled by aspartate 1452. Residues 1549–1578 (KALEKSAPRQNPKATATKTTQKPQAPVPVP) are disordered. The span at 1558–1572 (QNPKATATKTTQKPQ) shows a compositional bias: low complexity. Residues 1580–1658 (KQNKAIIDDF…QVKELILKLA (79 aa)) enclose the Carrier 1 domain. An O-(pantetheine 4'-phosphoryl)serine modification is found at serine 1617. A disordered region spans residues 1659–1700 (GSSSDENTTDTPDEEEDPATADADNTEMIRENPLESVSPNVS). A compositionally biased stretch (acidic residues) spans 1665–1677 (NTTDTPDEEEDPA). The 78-residue stretch at 1699–1776 (VSSSEAMDGF…QARLAIASLM (78 aa)) folds into the Carrier 2 domain. Serine 1736 bears the O-(pantetheine 4'-phosphoryl)serine mark. Residues 1783 to 1809 (GATTPYSGSDDAKSSTSSLTAGSVLTP) are disordered. Positions 1840–2070 (TLFLLPDGSG…TMMREPKVNQ (231 aa)) are thioesterase (TE) domain.

The catalysed reaction is 3 malonyl-CoA + acetyl-CoA + 2 H(+) = orsellinate + 3 CO2 + 4 CoA. The protein operates within secondary metabolite biosynthesis. In terms of biological role, non-reducing polyketide synthase; part of the gene cluster that mediates the biosynthesis of terrein, a fungal metabolite with ecological, antimicrobial, antiproliferative, and antioxidative activities. The first step in the pathway is performed by the polyketide synthase terA that produces 4-hydroxy-6-methylpyranon (4-HMP), orsellinic acid (OA), and 2,3-dehydro-6-hydroxymellein (2,3-dehydro-6-HM) by condensing acetyl-CoA with two, three, or four malonyl-CoA units, respectively. 4-HMP and OA are not pathway intermediates, but are rather shunt or side products. 2,3-dehydro-6-HM is further converted to 6-hydroxymellein (6-HM) by the 6-hydroxymellein synthase terB. The monooxygenases terC and terD, the multicopper oxidase terE and the Kelch-like protein terF are then involved in the transformation of 6-HM to terrein. Even if they are co-regulated with the other terrein cluster genes, terH and terI seem to be dispensable for terrein production; whereas one or both of the 2 transporters terG and terJ are probably required for efficient secretion of metabolites. The polypeptide is Non-reducing polyketide synthase terA (Aspergillus terreus (strain NIH 2624 / FGSC A1156)).